A 474-amino-acid polypeptide reads, in one-letter code: Adenosylhomocysteinase (474 aa).

Residues threonine 61, aspartate 136, and glutamate 196 each coordinate substrate. Residue 197–199 (TTT) coordinates NAD(+). The substrate site is built by lysine 226 and aspartate 230. NAD(+) contacts are provided by residues asparagine 231, 260-265 (GYGDVG), glutamate 283, asparagine 318, 339-341 (IGH), and asparagine 384.

This sequence belongs to the adenosylhomocysteinase family. The cofactor is NAD(+).

It localises to the cytoplasm. The catalysed reaction is S-adenosyl-L-homocysteine + H2O = L-homocysteine + adenosine. Its pathway is amino-acid biosynthesis; L-homocysteine biosynthesis; L-homocysteine from S-adenosyl-L-homocysteine: step 1/1. Functionally, may play a key role in the regulation of the intracellular concentration of adenosylhomocysteine. The protein is Adenosylhomocysteinase of Ralstonia pickettii (strain 12J).